An 85-amino-acid chain; its full sequence is Small ribosomal subunit protein bS20 (85 aa).

Belongs to the bacterial ribosomal protein bS20 family.

Functionally, binds directly to 16S ribosomal RNA. The chain is Small ribosomal subunit protein bS20 from Ruminiclostridium cellulolyticum (strain ATCC 35319 / DSM 5812 / JCM 6584 / H10) (Clostridium cellulolyticum).